The following is a 446-amino-acid chain: Divalent metal cation transporter MntH (446 aa).

Helical transmembrane passes span Leu-32–Ile-52, Ala-59–Leu-79, Ala-107–Ile-127, Ile-139–Met-159, Ala-168–Ser-188, Ile-205–Pro-225, Ser-264–Val-284, Pro-303–Ala-323, Leu-355–Asn-375, Gln-381–Leu-401, and Val-420–Ile-440.

Belongs to the NRAMP family.

The protein localises to the cell membrane. Functionally, h(+)-stimulated, divalent metal cation uptake system. The polypeptide is Divalent metal cation transporter MntH (Staphylococcus haemolyticus (strain JCSC1435)).